The following is a 355-amino-acid chain: Ornithine transcarbamylase, mitochondrial (355 aa).

Residues 1 to 35 constitute a mitochondrion transit peptide; the sequence is MLFINLRTLLNNAALRNGHNFVVRNFRCGQPVQDK. K71 carries the post-translational modification N6-acetyllysine; alternate. K71 is subject to N6-succinyllysine; alternate. K81 carries the N6-succinyllysine modification. The residue at position 89 (K89) is an N6-acetyllysine; alternate. Position 89 is an N6-succinyllysine; alternate (K89). 91–95 contributes to the carbamoyl phosphate binding site; the sequence is STRTR. S134 is modified (phosphoserine). R142 provides a ligand contact to carbamoyl phosphate. R142 is an L-ornithine binding site. K145 is subject to N6-acetyllysine; alternate. K145 carries the post-translational modification N6-succinyllysine; alternate. Residue H169 participates in carbamoyl phosphate binding. L-ornithine is bound at residue N200. N6-acetyllysine; alternate is present on residues K222, K232, and K239. N6-succinyllysine; alternate occurs at positions 222, 232, and 239. K244 is subject to N6-acetyllysine. 264 to 268 lines the L-ornithine pocket; that stretch reads DTWIS. An N6-succinyllysine mark is found at K275 and K290. The residue at position 293 (K293) is an N6-acetyllysine; alternate. Position 293 is an N6-succinyllysine; alternate (K293). 303–306 contacts L-ornithine; it reads HCLP. Residue C304 is part of the active site. K308 carries the N6-acetyllysine; alternate modification. An N6-succinyllysine; alternate modification is found at K308. R331 serves as a coordination point for carbamoyl phosphate. Position 331 (R331) interacts with L-ornithine.

It belongs to the aspartate/ornithine carbamoyltransferase superfamily. OTCase family. In terms of assembly, homotrimer. In terms of processing, acetylation at Lys-89 negatively regulates ornithine carbamoyltransferase activity in response to nutrient signals.

It is found in the mitochondrion matrix. The catalysed reaction is carbamoyl phosphate + L-ornithine = L-citrulline + phosphate + H(+). It functions in the pathway nitrogen metabolism; urea cycle; L-citrulline from L-ornithine and carbamoyl phosphate: step 1/1. With respect to regulation, negatively regulated by lysine acetylation. In terms of biological role, catalyzes the second step of the urea cycle, the condensation of carbamoyl phosphate with L-ornithine to form L-citrulline. The urea cycle ensures the detoxification of ammonia by converting it to urea for excretion. The chain is Ornithine transcarbamylase, mitochondrial from Ovis aries (Sheep).